We begin with the raw amino-acid sequence, 191 residues long: 2-amino-4-hydroxy-6-hydroxymethyldihydropteridine pyrophosphokinase (191 aa).

Belongs to the HPPK family.

It catalyses the reaction 6-hydroxymethyl-7,8-dihydropterin + ATP = (7,8-dihydropterin-6-yl)methyl diphosphate + AMP + H(+). The protein operates within cofactor biosynthesis; tetrahydrofolate biosynthesis; 2-amino-4-hydroxy-6-hydroxymethyl-7,8-dihydropteridine diphosphate from 7,8-dihydroneopterin triphosphate: step 4/4. Functionally, catalyzes the transfer of pyrophosphate from adenosine triphosphate (ATP) to 6-hydroxymethyl-7,8-dihydropterin, an enzymatic step in folate biosynthesis pathway. This is 2-amino-4-hydroxy-6-hydroxymethyldihydropteridine pyrophosphokinase (folK) from Mycobacterium leprae (strain TN).